Here is a 191-residue protein sequence, read N- to C-terminus: Fe/S biogenesis protein NfuA (191 aa).

Cys-149 and Cys-152 together coordinate [4Fe-4S] cluster.

The protein belongs to the NfuA family. Homodimer. It depends on [4Fe-4S] cluster as a cofactor.

In terms of biological role, involved in iron-sulfur cluster biogenesis. Binds a 4Fe-4S cluster, can transfer this cluster to apoproteins, and thereby intervenes in the maturation of Fe/S proteins. Could also act as a scaffold/chaperone for damaged Fe/S proteins. This chain is Fe/S biogenesis protein NfuA, found in Cronobacter sakazakii (strain ATCC BAA-894) (Enterobacter sakazakii).